Consider the following 215-residue polypeptide: Large ribosomal subunit protein uL4 (215 aa).

The disordered stretch occupies residues 46 to 72; the sequence is TAKSKNRAEVSGGGRKPWAQKGGGRAR. Residues 56–71 show a composition bias toward gly residues; the sequence is SGGGRKPWAQKGGGRA.

It belongs to the universal ribosomal protein uL4 family. Part of the 50S ribosomal subunit.

In terms of biological role, one of the primary rRNA binding proteins, this protein initially binds near the 5'-end of the 23S rRNA. It is important during the early stages of 50S assembly. It makes multiple contacts with different domains of the 23S rRNA in the assembled 50S subunit and ribosome. Forms part of the polypeptide exit tunnel. This is Large ribosomal subunit protein uL4 from Helicobacter pylori (strain Shi470).